Consider the following 435-residue polypeptide: Eukaryotic peptide chain release factor subunit 1-3 (435 aa).

Alanine 2 is subject to N-acetylalanine.

It belongs to the eukaryotic release factor 1 family. Heterodimer of two subunits, one of which binds GTP.

It localises to the cytoplasm. Its function is as follows. Directs the termination of nascent peptide synthesis (translation) in response to the termination codons UAA, UAG and UGA. Modulates plant growth and development. The polypeptide is Eukaryotic peptide chain release factor subunit 1-3 (Brassica oleracea var. botrytis (Cauliflower)).